The following is a 1202-amino-acid chain: Ribonuclease P protein component, mitochondrial (1202 aa).

A mitochondrion-targeting transit peptide spans 1–122 (MAFKSFIYSK…NNNNNQHRYY (122 aa)). The tract at residues 109-134 (NYVNNNNNNQHRYYSTGPTLPTNQYD) is disordered. Positions 118-134 (QHRYYSTGPTLPTNQYD) are enriched in polar residues.

Consists of an RNA moiety (RPM1) and the protein component (RPM2). Both are necessary for full enzymatic activity.

The protein localises to the mitochondrion. It catalyses the reaction Endonucleolytic cleavage of RNA, removing 5'-extranucleotides from tRNA precursor.. Its function is as follows. Ribonuclease P generates mature tRNA molecules by cleaving their 5'-ends. The polypeptide is Ribonuclease P protein component, mitochondrial (RPM2) (Saccharomyces cerevisiae (strain ATCC 204508 / S288c) (Baker's yeast)).